The following is a 190-amino-acid chain: Threonylcarbamoyl-AMP synthase (190 aa).

The region spanning 7–190 (LGSIAQAVDV…ALTGERFRQG (184 aa)) is the YrdC-like domain.

This sequence belongs to the SUA5 family. TsaC subfamily.

The protein resides in the cytoplasm. It catalyses the reaction L-threonine + hydrogencarbonate + ATP = L-threonylcarbamoyladenylate + diphosphate + H2O. In terms of biological role, required for the formation of a threonylcarbamoyl group on adenosine at position 37 (t(6)A37) in tRNAs that read codons beginning with adenine. Catalyzes the conversion of L-threonine, HCO(3)(-)/CO(2) and ATP to give threonylcarbamoyl-AMP (TC-AMP) as the acyladenylate intermediate, with the release of diphosphate. The protein is Threonylcarbamoyl-AMP synthase of Enterobacter sp. (strain 638).